We begin with the raw amino-acid sequence, 273 residues long: N(omega)-hydroxy-L-arginine amidinohydrolase (273 aa).

Residues Asp109, His111, Asp113, Asp198, and Asp200 each coordinate Mn(2+).

It belongs to the arginase family. Requires Mn(2+) as cofactor.

It carries out the reaction N(omega)-hydroxy-L-arginine + H2O = hydroxyurea + L-ornithine. Involved in the biosynthesis of the antibiotic D-cycloserine (DCS), a cyclic structural analog of D-alanine, used as an antitubercular agent. Catalyzes the hydrolysis of N(omega)-hydroxy-L-arginine (NHA) to yield hydroxyurea (HU) and L-ornithine. In Streptomyces lavendulae, this protein is N(omega)-hydroxy-L-arginine amidinohydrolase.